Reading from the N-terminus, the 193-residue chain is Superoxide dismutase [Fe] (193 aa).

A Fe cation-binding site is contributed by histidine 27. At lysine 51 the chain carries N6-acetyllysine. Fe cation contacts are provided by histidine 74, aspartate 157, and histidine 161.

Belongs to the iron/manganese superoxide dismutase family. As to quaternary structure, homodimer. Requires Fe cation as cofactor.

The enzyme catalyses 2 superoxide + 2 H(+) = H2O2 + O2. Its function is as follows. Destroys superoxide anion radicals which are normally produced within the cells and which are toxic to biological systems. The chain is Superoxide dismutase [Fe] (sodB) from Escherichia coli O157:H7.